Reading from the N-terminus, the 258-residue chain is Acetylglutamate kinase (258 aa).

Residues 44–45, R66, and N158 each bind substrate; that span reads GG. ATP is bound by residues 181–186 and 209–211; these read DVSGIL and IIT.

The protein belongs to the acetylglutamate kinase family. ArgB subfamily. Homodimer.

Its subcellular location is the cytoplasm. It catalyses the reaction N-acetyl-L-glutamate + ATP = N-acetyl-L-glutamyl 5-phosphate + ADP. Its pathway is amino-acid biosynthesis; L-arginine biosynthesis; N(2)-acetyl-L-ornithine from L-glutamate: step 2/4. Its function is as follows. Catalyzes the ATP-dependent phosphorylation of N-acetyl-L-glutamate. In Salmonella arizonae (strain ATCC BAA-731 / CDC346-86 / RSK2980), this protein is Acetylglutamate kinase.